Consider the following 740-residue polypeptide: F-BAR and double SH3 domains protein 2 (740 aa).

The F-BAR domain occupies valine 8–asparagine 282. Residues proline 303–serine 323 are disordered. Over residues aspartate 307 to serine 323 the composition is skewed to basic and acidic residues. A coiled-coil region spans residues glycine 356 to glutamine 397. SH3 domains lie at asparagine 469–serine 530 and alanine 567–alanine 629. The tract at residues alanine 567–alanine 629 is required and sufficient for location at clathrin-coated pits. The disordered stretch occupies residues glycine 633–valine 740. The span at serine 646–proline 657 shows a compositional bias: pro residues. Residues serine 675 and serine 681 each carry the phosphoserine modification.

Homodimer. Interacts (via SH3 domain 2) with ITSN1 (via SH3 domain 4). Recruited to clathrin-coated pits during a mid-to-late stage of assembly via interaction with ITSN1. Interacts (via SH3 domain 1) with WASL. Interacts with WAS. Interacts with CASK and MAGI1. CASK inhibits interaction with MAGI1. Post-translationally, phosphorylated. Phosphorylation on a Ser residue is important for recruitment to the cell membrane and for its role in promoting endocytosis. In terms of tissue distribution, liver, brain, heart, placenta, skeletal muscle, pancreas, lung and kidney.

Its subcellular location is the cytoplasm. It localises to the cell junction. It is found in the membrane. The protein resides in the clathrin-coated pit. The protein localises to the cell membrane. Its subcellular location is the cell projection. It localises to the stereocilium. Its function is as follows. Adapter protein that plays a role in endocytosis via clathrin-coated pits. Contributes to the internalization of cell surface receptors, such as integrin ITGB1 and transferrin receptor. Promotes endocytosis of EGFR in cancer cells, and thereby contributes to the down-regulation of EGFR signaling. Recruited to clathrin-coated pits during a mid-to-late stage of assembly, where it is required for normal progress from U-shaped intermediate stage pits to terminal, omega-shaped pits. Binds to membranes enriched in phosphatidylinositol 3,4-bisphosphate or phosphatidylinositol 3,4,5-trisphosphate. When bound to membranes, promotes actin polymerization via its interaction with WAS and/or WASL which leads to the activation of the Arp2/3 complex. Does not promote actin polymerisation in the absence of membranes. The sequence is that of F-BAR and double SH3 domains protein 2 (FCHSD2) from Homo sapiens (Human).